A 423-amino-acid chain; its full sequence is Autophagy-related protein 18 (423 aa).

4 WD repeats span residues 1–34 (MNYV…KIFT), 183–223 (AHRA…KLYQ), 228–267 (TYPS…TGMP), and 367–407 (SRSG…GGEG). The L/FRRG motif motif lies at 224–228 (FRRGT). A disordered region spans residues 260–320 (GGPVTGMPES…KSTGTFGSMI (61 aa)).

Belongs to the WD repeat PROPPIN family. Component of the PI(3,5)P2 regulatory complex.

Its subcellular location is the preautophagosomal structure membrane. The protein resides in the vacuole membrane. The protein localises to the endosome membrane. Functionally, the PI(3,5)P2 regulatory complex regulates both the synthesis and turnover of phosphatidylinositol 3,5-bisphosphate (PtdIns(3,5)P2). Necessary for proper vacuole morphology. Plays an important role in osmotically-induced vacuole fragmentation. Required for cytoplasm to vacuole transport (Cvt) vesicle formation, pexophagy and starvation-induced autophagy. Involved in correct atg9 trafficking to the pre-autophagosomal structure. Might also be involved in premeiotic DNA replication. This Sclerotinia sclerotiorum (strain ATCC 18683 / 1980 / Ss-1) (White mold) protein is Autophagy-related protein 18 (atg18).